The chain runs to 345 residues: Ubiquitin-associated domain-containing protein 2 (345 aa).

The first 35 residues, 1 to 35 (MFTSTGSSGLYKAPLSKSLLLVPSALSLLLALLLP), serve as a signal peptide directing secretion. Topologically, residues 36–91 (HCQKLFVYDLHAVKNDFQIWRLICGRIICLDLKDTFCSSLLIYNFRIFERRYGSRK) are extracellular. The helical transmembrane segment at 92–112 (FASFLLGSWVLSALFDFLLVE) threads the bilayer. Topologically, residues 113 to 125 (AMQYFFGITAASN) are cytoplasmic. A helical transmembrane segment spans residues 126–146 (LPSGFLAPVFALFVPFYCSIP). The Extracellular segment spans residues 147-163 (RVQVAQILGPLSITNKT). Asn-161 carries N-linked (GlcNAc...) asparagine glycosylation. The helical transmembrane segment at 164 to 184 (LIYILGLQLFTSGSYIWIVAI) threads the bilayer. The Cytoplasmic segment spans residues 185–345 (SGLMSGLCYN…NVATNFLLQH (161 aa)). The region spanning 305–345 (EVSEEQVARLMEMGFSRGDALEALRASNNDLNVATNFLLQH) is the UBA domain.

Interacts with LMBR1L, FAF2, AMFR and VCP.

It localises to the endoplasmic reticulum membrane. In terms of biological role, restricts trafficking of FAF2 from the endoplasmic reticulum to lipid droplets. In association with LMBR1L and E3 ubiquitin-protein ligase AMFR, negatively regulates the canonical Wnt signaling pathway in the lymphocytes by promoting the ubiquitin-mediated degradation of CTNNB1 and Wnt receptors FZD6 and LRP6. This Macaca fascicularis (Crab-eating macaque) protein is Ubiquitin-associated domain-containing protein 2 (UBAC2).